The primary structure comprises 240 residues: MRTLTIYHLGLIDYRTAWDVQRRIARARSAGQVGDTLLLLEHPPTITLGSRASTEHLLVPAEHLSAEGVTVVQSDRGGGATYHAPGQIVAYPIFKLLQHGRDIGRYLRGLEESVIRVLRDDGLIGERVPGLTGVWVRNGAAKICAIGIKVSAGGVTTHGLALNVNIDLRGFDLIVPCGVHGRGVTSMSAELGEVVAMSSVAERLIGHLCAVFDLEPAVVVTAGQWTAHLPAAERDHLAQR.

Residues 31–216 (GQVGDTLLLL…HLCAVFDLEP (186 aa)) enclose the BPL/LPL catalytic domain. Residues 76–83 (RGGGATYH), 145–147 (AIG), and 159–161 (GLA) contribute to the substrate site. Residue C177 is the Acyl-thioester intermediate of the active site.

Belongs to the LipB family.

The protein resides in the cytoplasm. It carries out the reaction octanoyl-[ACP] + L-lysyl-[protein] = N(6)-octanoyl-L-lysyl-[protein] + holo-[ACP] + H(+). Its pathway is protein modification; protein lipoylation via endogenous pathway; protein N(6)-(lipoyl)lysine from octanoyl-[acyl-carrier-protein]: step 1/2. Its function is as follows. Catalyzes the transfer of endogenously produced octanoic acid from octanoyl-acyl-carrier-protein onto the lipoyl domains of lipoate-dependent enzymes. Lipoyl-ACP can also act as a substrate although octanoyl-ACP is likely to be the physiological substrate. This is Octanoyltransferase from Roseiflexus sp. (strain RS-1).